We begin with the raw amino-acid sequence, 394 residues long: Elongation factor Tu 2 (394 aa).

One can recognise a tr-type G domain in the interval 10-204 (KPHVNVGTIG…ALDSYIPEPE (195 aa)). The segment at 19–26 (GHVDHGKT) is G1. 19 to 26 (GHVDHGKT) contacts GTP. Residue T26 coordinates Mg(2+). Residues 60-64 (GITIN) form a G2 region. The G3 stretch occupies residues 81–84 (DCPG). GTP is bound by residues 81 to 85 (DCPGH) and 136 to 139 (NKCD). The interval 136-139 (NKCD) is G4. Residues 174–176 (SAL) form a G5 region.

This sequence belongs to the TRAFAC class translation factor GTPase superfamily. Classic translation factor GTPase family. EF-Tu/EF-1A subfamily. In terms of assembly, monomer.

The protein localises to the cytoplasm. The catalysed reaction is GTP + H2O = GDP + phosphate + H(+). Functionally, GTP hydrolase that promotes the GTP-dependent binding of aminoacyl-tRNA to the A-site of ribosomes during protein biosynthesis. This chain is Elongation factor Tu 2, found in Shewanella loihica (strain ATCC BAA-1088 / PV-4).